Consider the following 545-residue polypeptide: MADISISPDEIRDALKDFVSKYEPAKAATAEVGHVLDASDGIAHVEGLPGVMANELIRFADGTLGLAQNLDENEIGVVVLGEFEGIVEGMEVTRTGEVLSVPVGDGYLGRVVDPLGNPIDGLGEIATEGRRELELQAPGVMHRKSVHEPLQTGIKAIDAMIPVGRGQRQLIIGDRQTGKTAIAIDTIINQKANWESGDVTKQVRCIYVAVGQKGSTIAAVKGALEDAGAMEYTTIVAAPASDPAGFKYLAPYTGSAIGQHWMYGGKHVLIIFDDLSKQAEAYRAVSLLLRRPPGREAYPGDVFYLHSRLLERCAKLSDELGAGSMTGLPIIETKANDVSAYIPTNVISITDGQIFLQSDLFNANQRPAVDVGISVSRVGGDAQVKSIKKVSGTLKLELAQYRSLEAFAMFASDLDAASRRQLARGARLTELLKQPQYSPYPVEEQVVSIWAGINGKLDEVAVEDVLRFESELLDHLRRNTGILTTLRDTNVLDDETVEKLSSEVDAFKLEFQTGEGKPLAAVGREDFDAIAEEDVNQERIVKAKR.

173–180 contributes to the ATP binding site; sequence GDRQTGKT.

The protein belongs to the ATPase alpha/beta chains family. As to quaternary structure, F-type ATPases have 2 components, CF(1) - the catalytic core - and CF(0) - the membrane proton channel. CF(1) has five subunits: alpha(3), beta(3), gamma(1), delta(1), epsilon(1). CF(0) has three main subunits: a(1), b(2) and c(9-12). The alpha and beta chains form an alternating ring which encloses part of the gamma chain. CF(1) is attached to CF(0) by a central stalk formed by the gamma and epsilon chains, while a peripheral stalk is formed by the delta and b chains.

It is found in the cell membrane. It catalyses the reaction ATP + H2O + 4 H(+)(in) = ADP + phosphate + 5 H(+)(out). Functionally, produces ATP from ADP in the presence of a proton gradient across the membrane. The alpha chain is a regulatory subunit. The protein is ATP synthase subunit alpha of Leifsonia xyli subsp. xyli (strain CTCB07).